We begin with the raw amino-acid sequence, 123 residues long: Large ribosomal subunit protein eL8 (123 aa).

It belongs to the eukaryotic ribosomal protein eL8 family. In terms of assembly, part of the 50S ribosomal subunit. Probably part of the RNase P complex.

The protein resides in the cytoplasm. In terms of biological role, multifunctional RNA-binding protein that recognizes the K-turn motif in ribosomal RNA, the RNA component of RNase P, box H/ACA, box C/D and box C'/D' sRNAs. In Thermococcus kodakarensis (strain ATCC BAA-918 / JCM 12380 / KOD1) (Pyrococcus kodakaraensis (strain KOD1)), this protein is Large ribosomal subunit protein eL8.